The following is a 251-amino-acid chain: NADPH-dependent oxidoreductase (251 aa).

It belongs to the flavin oxidoreductase frp family. FMN serves as cofactor.

Its function is as follows. Reduces FMN, organic nitro compounds and disulfide DTNB. Involved in maintenance of the cellular redox state and the disulfide stress response. This chain is NADPH-dependent oxidoreductase (nfrA), found in Staphylococcus aureus (strain USA300).